The primary structure comprises 191 residues: Protein Ves (191 aa).

This sequence belongs to the Ves family.

The polypeptide is Protein Ves (Escherichia coli O7:K1 (strain IAI39 / ExPEC)).